The primary structure comprises 245 residues: tRNA (guanine-N(1)-)-methyltransferase (245 aa).

S-adenosyl-L-methionine is bound by residues G114 and I134–L139.

Belongs to the RNA methyltransferase TrmD family. As to quaternary structure, homodimer.

It is found in the cytoplasm. The catalysed reaction is guanosine(37) in tRNA + S-adenosyl-L-methionine = N(1)-methylguanosine(37) in tRNA + S-adenosyl-L-homocysteine + H(+). Its function is as follows. Specifically methylates guanosine-37 in various tRNAs. This is tRNA (guanine-N(1)-)-methyltransferase from Listeria monocytogenes serotype 4b (strain CLIP80459).